The sequence spans 134 residues: D-ribose pyranase (134 aa).

H20 acts as the Proton donor in catalysis. Substrate contacts are provided by residues D28, H99, and 123 to 125 (YSN).

Belongs to the RbsD / FucU family. RbsD subfamily. Homodecamer.

Its subcellular location is the cytoplasm. It catalyses the reaction beta-D-ribopyranose = beta-D-ribofuranose. It participates in carbohydrate metabolism; D-ribose degradation; D-ribose 5-phosphate from beta-D-ribopyranose: step 1/2. In terms of biological role, catalyzes the interconversion of beta-pyran and beta-furan forms of D-ribose. This chain is D-ribose pyranase, found in Staphylococcus aureus (strain USA300).